The primary structure comprises 612 residues: Glutamine--fructose-6-phosphate aminotransferase [isomerizing] (612 aa).

The active-site Nucleophile; for GATase activity is the Cys-2. One can recognise a Glutamine amidotransferase type-2 domain in the interval 2 to 219 (CGIVGANSTR…EGDIAIISKD (218 aa)). SIS domains are found at residues 287–427 (AKEL…LKNS) and 460–602 (ISEY…VDQP). Lys-607 acts as the For Fru-6P isomerization activity in catalysis.

Homodimer.

It localises to the cytoplasm. It catalyses the reaction D-fructose 6-phosphate + L-glutamine = D-glucosamine 6-phosphate + L-glutamate. In terms of biological role, catalyzes the first step in hexosamine metabolism, converting fructose-6P into glucosamine-6P using glutamine as a nitrogen source. This chain is Glutamine--fructose-6-phosphate aminotransferase [isomerizing], found in Francisella tularensis subsp. tularensis (strain SCHU S4 / Schu 4).